Consider the following 307-residue polypeptide: tRNA dimethylallyltransferase (307 aa).

Gly-9–Ser-16 lines the ATP pocket. Thr-11–Ser-16 serves as a coordination point for substrate.

It belongs to the IPP transferase family. Monomer. Mg(2+) serves as cofactor.

The enzyme catalyses adenosine(37) in tRNA + dimethylallyl diphosphate = N(6)-dimethylallyladenosine(37) in tRNA + diphosphate. Catalyzes the transfer of a dimethylallyl group onto the adenine at position 37 in tRNAs that read codons beginning with uridine, leading to the formation of N6-(dimethylallyl)adenosine (i(6)A). This Clavibacter sepedonicus (Clavibacter michiganensis subsp. sepedonicus) protein is tRNA dimethylallyltransferase.